The chain runs to 885 residues: Protein PTHB1 (885 aa).

Residues 1–406 (MSLFKARDWW…LQGVWPLTEQ (406 aa)) form a seven-bladed beta-propeller region. The interval 684-764 (RDKTPAPLQH…FLPLQEDTQE (81 aa)) is interaction with LZTL1.

Part of BBSome complex, that contains BBS1, BBS2, BBS4, BBS5, BBS7, BBS8/TTC8, BBS9 and BBIP10. Interacts with LZTL1; the interaction mediates the association of LZTL1 with the BBsome complex and regulates BBSome ciliary trafficking.

It localises to the cell projection. The protein localises to the cilium membrane. Its subcellular location is the cytoplasm. The protein resides in the cytoskeleton. It is found in the microtubule organizing center. It localises to the centrosome. The protein localises to the centriolar satellite. Its function is as follows. The BBSome complex is thought to function as a coat complex required for sorting of specific membrane proteins to the primary cilia. The BBSome complex is required for ciliogenesis but is dispensable for centriolar satellite function. This ciliogenic function is mediated in part by the Rab8 GDP/GTP exchange factor, which localizes to the basal body and contacts the BBSome. Rab8(GTP) enters the primary cilium and promotes extension of the ciliary membrane. Firstly the BBSome associates with the ciliary membrane and binds to RAB3IP/Rabin8, the guanosyl exchange factor (GEF) for Rab8 and then the Rab8-GTP localizes to the cilium and promotes docking and fusion of carrier vesicles to the base of the ciliary membrane. Required for proper BBSome complex assembly and its ciliary localization. This is Protein PTHB1 (Bbs9) from Mus musculus (Mouse).